The primary structure comprises 201 residues: MRTGEVHRHTGETDVKVKLDLDGSGCCEASTGVPFLDHMLNQISSHGLIDLTITAVGDTHIDDHHTNEDVGIAVGQALSQALGDRKGIHRFGHFVAPLDEALVQVALDCSGRPHISYGLTIPTQKIGSYDTELVKEFFVAVANNSGLTLHIRQLDGVNSHHIVEACFKAFARALRMATEIDPRRAGAIPSSKGVLEQAGAN.

It belongs to the imidazoleglycerol-phosphate dehydratase family.

It localises to the cytoplasm. It carries out the reaction D-erythro-1-(imidazol-4-yl)glycerol 3-phosphate = 3-(imidazol-4-yl)-2-oxopropyl phosphate + H2O. It participates in amino-acid biosynthesis; L-histidine biosynthesis; L-histidine from 5-phospho-alpha-D-ribose 1-diphosphate: step 6/9. In Synechococcus sp. (strain CC9902), this protein is Imidazoleglycerol-phosphate dehydratase.